Consider the following 52-residue polypeptide: MWKVWLLFDPRRTLVALFTFLFVLALLIHFILLSTDRFNWMQGAPTAPAQTS.

The Cytoplasmic portion of the chain corresponds to 1 to 12 (MWKVWLLFDPRR). A helical transmembrane segment spans residues 13-33 (TLVALFTFLFVLALLIHFILL). H29 contacts a bacteriochlorophyll. The Periplasmic portion of the chain corresponds to 34 to 52 (STDRFNWMQGAPTAPAQTS).

This sequence belongs to the antenna complex alpha subunit family. As to quaternary structure, the core complex is formed by different alpha and beta chains, binding bacteriochlorophyll molecules, and arranged most probably in tetrameric structures disposed around the reaction center. The non-pigmented gamma chains may constitute additional components.

It localises to the cell inner membrane. In terms of biological role, antenna complexes are light-harvesting systems, which transfer the excitation energy to the reaction centers. The chain is Light-harvesting protein B-880 alpha chain from Afifella marina (Rhodobium marinum).